Here is a 704-residue protein sequence, read N- to C-terminus: MNEKKVYSYEWAGRPLVIEVGQLAKQANGAVLVRYGDTSVLSTATMSKSPKPLDFFPLTVNYEERLYAAGKIPGGFIKREGRPSEKAILASRLIDRPIRPMFPDGFRNEVQVISMVMSNDSDCTSEMAAMVGSSLALAISDIPFDGPIAGVQVGYIDGEFIVNPTVEQSNQSTIHLSVAGNKDAINMVEAGALEVPEEVMLEAIMFGHEEIKKIIAFQEQIVAEVGKEKKPVTLFEIDEAIQADIKAACETDMHDAIQTAEKHARDEAIQAVKDRIIASYEEQEADDDTMKQVYTILDKMVKDEVRRQITEDKIRPDGRKLDEIRPLSSETGLLQRTHGSGLFTRGQTQALSICTLGALGDVQIIDGLGVEESKRFMHHYNFPQFSVGETGPIRGPGRREIGHGALGERALEAVIPDESVFPYTIRCVSEVLESNGSTSQASICASTLAMMDAGVPLKAPVAGIAMGLIKKGEHYSILTDIQGMEDHLGDMDFKVAGTAKGVTALQMDIKIDGLSRNILEEALTQAKVGRMHILESMLATLAEPRKQLSEFAPKIVIVKINPDKIRDVIGPGGKQINKIIEETGVKIDTEQDGTIYISSANEEMNARAKQIIEDIVREAKVGEYYLSTVKRIEKFGAFCEIFPGKDGLLHISEIQEERTKQVEDVLKLGDQLLVKVIEIDKQGRVNLSRKVVLQEEKERAEQQK.

Mg(2+) is bound by residues aspartate 486 and aspartate 492. The 60-residue stretch at 553–612 folds into the KH domain; that stretch reads PKIVIVKINPDKIRDVIGPGGKQINKIIEETGVKIDTEQDGTIYISSANEEMNARAKQII. The S1 motif domain occupies 622–690; that stretch reads GEYYLSTVKR…KQGRVNLSRK (69 aa).

This sequence belongs to the polyribonucleotide nucleotidyltransferase family. It depends on Mg(2+) as a cofactor.

The protein resides in the cytoplasm. It catalyses the reaction RNA(n+1) + phosphate = RNA(n) + a ribonucleoside 5'-diphosphate. Its function is as follows. Involved in mRNA degradation. Catalyzes the phosphorolysis of single-stranded polyribonucleotides processively in the 3'- to 5'-direction. This is Polyribonucleotide nucleotidyltransferase from Lysinibacillus sphaericus (strain C3-41).